The chain runs to 387 residues: Phosphoglycerate kinase (387 aa).

Substrate-binding positions include 21 to 23 (DLN), arginine 36, 59 to 62 (HLGR), arginine 113, and arginine 146. ATP contacts are provided by residues lysine 197, glutamate 314, and 340–343 (GGDT).

This sequence belongs to the phosphoglycerate kinase family. In terms of assembly, monomer.

The protein localises to the cytoplasm. It carries out the reaction (2R)-3-phosphoglycerate + ATP = (2R)-3-phospho-glyceroyl phosphate + ADP. It participates in carbohydrate degradation; glycolysis; pyruvate from D-glyceraldehyde 3-phosphate: step 2/5. This is Phosphoglycerate kinase from Salmonella schwarzengrund (strain CVM19633).